A 239-amino-acid polypeptide reads, in one-letter code: 1-(5-phosphoribosyl)-5-[(5-phosphoribosylamino)methylideneamino] imidazole-4-carboxamide isomerase (239 aa).

Asp-8 (proton acceptor) is an active-site residue. Asp-129 (proton donor) is an active-site residue.

The protein belongs to the HisA/HisF family.

Its subcellular location is the cytoplasm. The enzyme catalyses 1-(5-phospho-beta-D-ribosyl)-5-[(5-phospho-beta-D-ribosylamino)methylideneamino]imidazole-4-carboxamide = 5-[(5-phospho-1-deoxy-D-ribulos-1-ylimino)methylamino]-1-(5-phospho-beta-D-ribosyl)imidazole-4-carboxamide. It participates in amino-acid biosynthesis; L-histidine biosynthesis; L-histidine from 5-phospho-alpha-D-ribose 1-diphosphate: step 4/9. In Cereibacter sphaeroides (strain ATCC 17025 / ATH 2.4.3) (Rhodobacter sphaeroides), this protein is 1-(5-phosphoribosyl)-5-[(5-phosphoribosylamino)methylideneamino] imidazole-4-carboxamide isomerase.